A 202-amino-acid polypeptide reads, in one-letter code: Imidazoleglycerol-phosphate dehydratase (202 aa).

It belongs to the imidazoleglycerol-phosphate dehydratase family.

It is found in the cytoplasm. The catalysed reaction is D-erythro-1-(imidazol-4-yl)glycerol 3-phosphate = 3-(imidazol-4-yl)-2-oxopropyl phosphate + H2O. Its pathway is amino-acid biosynthesis; L-histidine biosynthesis; L-histidine from 5-phospho-alpha-D-ribose 1-diphosphate: step 6/9. The chain is Imidazoleglycerol-phosphate dehydratase from Chelativorans sp. (strain BNC1).